We begin with the raw amino-acid sequence, 423 residues long: Zinc-type alcohol dehydrogenase-like protein C1198.01 (423 aa).

The tract at residues 14–36 (KQLGHREVSEGSTQPKPDPSGAT) is disordered. The Zn(2+) site is built by cysteine 74, histidine 97, cysteine 127, cysteine 130, cysteine 133, and cysteine 141.

It belongs to the zinc-containing alcohol dehydrogenase family. Class-III subfamily. Zn(2+) is required as a cofactor.

The protein resides in the golgi apparatus. The polypeptide is Zinc-type alcohol dehydrogenase-like protein C1198.01 (Schizosaccharomyces pombe (strain 972 / ATCC 24843) (Fission yeast)).